Reading from the N-terminus, the 414-residue chain is Serine/threonine-protein kinase 32B (414 aa).

One can recognise a Protein kinase domain in the interval 23–283 (FQILRAIGKG…LHDIQSVPYL (261 aa)). ATP-binding positions include 29–37 (IGKGSFGKV) and Lys-52. Asp-146 (proton acceptor) is an active-site residue. The interval 374–396 (QGQGSQLLDTDSRGGGQAQSKLQ) is disordered.

Belongs to the protein kinase superfamily. Ser/Thr protein kinase family. It depends on Mg(2+) as a cofactor.

It catalyses the reaction L-seryl-[protein] + ATP = O-phospho-L-seryl-[protein] + ADP + H(+). The enzyme catalyses L-threonyl-[protein] + ATP = O-phospho-L-threonyl-[protein] + ADP + H(+). The polypeptide is Serine/threonine-protein kinase 32B (Homo sapiens (Human)).